We begin with the raw amino-acid sequence, 280 residues long: Acetyl-coenzyme A carboxylase carboxyl transferase subunit beta (280 aa).

Positions 24 to 280 constitute a CoA carboxyltransferase N-terminal domain; it reads AWIKCDKCKN…IYTLIRHTHG (257 aa). Cys-28, Cys-31, Cys-47, and Cys-50 together coordinate Zn(2+). The C4-type zinc-finger motif lies at 28-50; sequence CDKCKNILYIEDLLKNLKICPHC.

The protein belongs to the AccD/PCCB family. As to quaternary structure, acetyl-CoA carboxylase is a heterohexamer composed of biotin carboxyl carrier protein (AccB), biotin carboxylase (AccC) and two subunits each of ACCase subunit alpha (AccA) and ACCase subunit beta (AccD). Requires Zn(2+) as cofactor.

It localises to the cytoplasm. It carries out the reaction N(6)-carboxybiotinyl-L-lysyl-[protein] + acetyl-CoA = N(6)-biotinyl-L-lysyl-[protein] + malonyl-CoA. The protein operates within lipid metabolism; malonyl-CoA biosynthesis; malonyl-CoA from acetyl-CoA: step 1/1. Functionally, component of the acetyl coenzyme A carboxylase (ACC) complex. Biotin carboxylase (BC) catalyzes the carboxylation of biotin on its carrier protein (BCCP) and then the CO(2) group is transferred by the transcarboxylase to acetyl-CoA to form malonyl-CoA. In Sulfurihydrogenibium sp. (strain YO3AOP1), this protein is Acetyl-coenzyme A carboxylase carboxyl transferase subunit beta.